Consider the following 366-residue polypeptide: tRNA/tmRNA (uracil-C(5))-methyltransferase (366 aa).

The S-adenosyl-L-methionine site is built by Gln189, Tyr217, Asn222, Glu238, and Asp298. Residue Cys323 is the Nucleophile of the active site. Glu357 serves as the catalytic Proton acceptor.

Belongs to the class I-like SAM-binding methyltransferase superfamily. RNA M5U methyltransferase family. TrmA subfamily.

It catalyses the reaction uridine(54) in tRNA + S-adenosyl-L-methionine = 5-methyluridine(54) in tRNA + S-adenosyl-L-homocysteine + H(+). The catalysed reaction is uridine(341) in tmRNA + S-adenosyl-L-methionine = 5-methyluridine(341) in tmRNA + S-adenosyl-L-homocysteine + H(+). Functionally, dual-specificity methyltransferase that catalyzes the formation of 5-methyluridine at position 54 (m5U54) in all tRNAs, and that of position 341 (m5U341) in tmRNA (transfer-mRNA). The polypeptide is tRNA/tmRNA (uracil-C(5))-methyltransferase (Photorhabdus laumondii subsp. laumondii (strain DSM 15139 / CIP 105565 / TT01) (Photorhabdus luminescens subsp. laumondii)).